A 218-amino-acid polypeptide reads, in one-letter code: Protein-L-isoaspartate O-methyltransferase (218 aa).

S60 is a catalytic residue.

Belongs to the methyltransferase superfamily. L-isoaspartyl/D-aspartyl protein methyltransferase family.

It is found in the cytoplasm. The enzyme catalyses [protein]-L-isoaspartate + S-adenosyl-L-methionine = [protein]-L-isoaspartate alpha-methyl ester + S-adenosyl-L-homocysteine. Its function is as follows. Catalyzes the methyl esterification of L-isoaspartyl residues in peptides and proteins that result from spontaneous decomposition of normal L-aspartyl and L-asparaginyl residues. It plays a role in the repair and/or degradation of damaged proteins. The polypeptide is Protein-L-isoaspartate O-methyltransferase (Roseiflexus sp. (strain RS-1)).